A 462-amino-acid chain; its full sequence is Transcription factor-like protein EUC1 (462 aa).

Disordered regions lie at residues 11–43 (GFGGYGSLDDDDSDRDSERRNHDLGQRTITTSP) and 66–97 (RPTDAAQPPIVSTSTSASATEPTNRIGPGRIK). A phosphoserine mark is found at Ser17 and Ser23. The segment covering 26 to 35 (DSERRNHDLG) has biased composition (basic and acidic residues). The interval 81-140 (SASATEPTNRIGPGRIKETPETNFNAFLIAQLTRMEEQNANLKEEISLMKKEQELFFLEN) is homodimerization region. Positions 105 to 135 (NAFLIAQLTRMEEQNANLKEEISLMKKEQEL) form a coiled coil. Disordered regions lie at residues 190–214 (QEAARVGNPSTSTQAHQSQSRSTNW) and 226–289 (GDPR…RNRR). Positions 197–214 (NPSTSTQAHQSQSRSTNW) are enriched in polar residues. Residue Lys231 forms a Glycyl lysine isopeptide (Lys-Gly) (interchain with G-Cter in SUMO) linkage. Phosphoserine is present on residues Ser237 and Ser249. A compositionally biased stretch (acidic residues) spans 240–251 (ENGEYDGNESDE). Positions 252–282 (NATTRNLPLNNPDSVSNADDSNNQLDGTGNE) are enriched in polar residues. At Thr254 the chain carries Phosphothreonine. The segment at 296 to 385 (YKLNRAIQNV…QAIKVVENIR (90 aa)) is GCR1 DNA-binding region. Polar residues predominate over residues 441 to 455 (SLQQPHSIPNSSTGT). The interval 441 to 462 (SLQQPHSIPNSSTGTPEHDQDT) is disordered.

In terms of assembly, homodimer. Interacts with SLX5. Sumoylated at Lys-231 and subsequently ubiquitinated by the SUMO-targeted ubiquitin ligase (STUbL) complex SLX5/SLX8.

It is found in the chromosome. Its function is as follows. Transcription factor-like protein that binds to specific DNA motifs called ub-HS-motif associated with several locations where proteins other than histone H2B are ubiquitinated (ub-hotspots). Ubiquitination at these sites depends on the SUMO-targeted ubiquitin ligase (STUbL) complex SLX5/SLX8 and protein turnover on the CDC48 segregase. UBC9, SIZ1, or SIZ2 sumoylate DNA-bound EUC1 to stabilize its DNA-binding. Sumoylated EUC1 acts a cofactor required for the recruitment of the SLX5/SLX8 STUbL complex via specific contacts between EUC1 and SLX5, as well as an additional SUMO-mediated interaction. SLX5/SLX8 then ubiquitinates EUC1 and presumably other targets at ub-hotspots, and the CDC48/UFD1/NPL4 complex, together with UBX4 and UBX5, removes Lys-48-linked ubiquitinated proteins from chromatin. Ubiquitinated proteins could be either degraded by the proteasome or recycled by deubiquitination. EUC1 itself does not seem to underlie extensive turnover, as it is a very stable protein. EUC1 is able to act as a transcription factor, but its function at ub-hotspots does not seem to depend on this ability. EUC1-mediated ub-hotspots are crucial during stress responses when gene expression control is impaired. In Saccharomyces cerevisiae (strain ATCC 204508 / S288c) (Baker's yeast), this protein is Transcription factor-like protein EUC1.